We begin with the raw amino-acid sequence, 290 residues long: ATP synthase gamma chain (290 aa).

It belongs to the ATPase gamma chain family. In terms of assembly, F-type ATPases have 2 components, CF(1) - the catalytic core - and CF(0) - the membrane proton channel. CF(1) has five subunits: alpha(3), beta(3), gamma(1), delta(1), epsilon(1). CF(0) has three main subunits: a, b and c.

Its subcellular location is the cell membrane. Produces ATP from ADP in the presence of a proton gradient across the membrane. The gamma chain is believed to be important in regulating ATPase activity and the flow of protons through the CF(0) complex. The sequence is that of ATP synthase gamma chain from Heliobacterium modesticaldum (strain ATCC 51547 / Ice1).